We begin with the raw amino-acid sequence, 501 residues long: Sarpagan bridge enzyme (501 aa).

The chain crosses the membrane as a helical; Signal-anchor for type II membrane protein span at residues 3–23 (VMQLSFSYPALFLFVFFLFML). Cys441 provides a ligand contact to heme.

The protein belongs to the cytochrome P450 family. Heme is required as a cofactor. Highly expressed in roots. Expressed at low levels in stems.

It localises to the endoplasmic reticulum membrane. It carries out the reaction (19E)-geissoschizine + reduced [NADPH--hemoprotein reductase] + O2 = polyneuridine aldehyde + oxidized [NADPH--hemoprotein reductase] + 2 H2O + H(+). The catalysed reaction is tetrahydroalstonine + A + reduced [NADPH--hemoprotein reductase] + O2 = alstonine + AH2 + oxidized [NADPH--hemoprotein reductase] + 2 H2O + H(+). It catalyses the reaction ajmalicine + A + reduced [NADPH--hemoprotein reductase] + O2 = serpentine + AH2 + oxidized [NADPH--hemoprotein reductase] + 2 H2O + H(+). Its pathway is alkaloid biosynthesis; ajmaline biosynthesis. Monooxygenase involved in the biosynthesis of ajmaline-type monoterpenoid indole alkaloids (MIAs) natural products, important plant-derived pharmaceuticals used in the therapy of heart disorders. Converts by cyclization the strictosidine-derived geissoschizine to the sarpagan alkaloid polyneuridine aldehyde, precursor of vomilenine, an intermediate chemical in the biosynthesis of ajmaline. Converts by aromatization the tetrahydro-beta-carboline alkaloids tetrahydroalstonine and ajmalicine to the corresponding beta-carboline alkaloids alstonine and serpentine, respectively. The sequence is that of Sarpagan bridge enzyme from Gelsemium sempervirens (Carolina jasmine).